Here is a 1121-residue protein sequence, read N- to C-terminus: CRISPR-associated endonuclease Cas9 1 (1121 aa).

The For RuvC-like nuclease domain role is filled by D9. Residues D9, E509, and E513 each contribute to the Mg(2+) site. The region spanning 516–684 (EDDEKKAIQK…VRKKFIERNL (169 aa)) is the HNH Cas9-type domain. H599 (proton acceptor for HNH nuclease domain) is an active-site residue. Residue H738 participates in Mg(2+) binding.

Belongs to the CRISPR-associated protein Cas9 family. Subtype II-A subfamily. Monomer. Binds crRNA and tracrRNA. Requires Mg(2+) as cofactor.

In terms of biological role, CRISPR (clustered regularly interspaced short palindromic repeat) is an adaptive immune system that provides protection against mobile genetic elements (viruses, transposable elements and conjugative plasmids). CRISPR clusters contain spacers, sequences complementary to antecedent mobile elements, and target invading nucleic acids. CRISPR clusters are transcribed and processed into CRISPR RNA (crRNA). In type II CRISPR systems correct processing of pre-crRNA requires a trans-encoded small RNA (tracrRNA), endogenous ribonuclease 3 (rnc) and this protein. The tracrRNA serves as a guide for ribonuclease 3-aided processing of pre-crRNA. Subsequently Cas9/crRNA/tracrRNA endonucleolytically cleaves linear or circular dsDNA target complementary to the spacer; Cas9 is inactive in the absence of the 2 guide RNAs (gRNA). Cas9 recognizes the protospacer adjacent motif (PAM) in the CRISPR repeat sequences to help distinguish self versus nonself, as targets within the bacterial CRISPR locus do not have PAMs. PAM recognition is also required for catalytic activity. Cuts target DNA when Cas9 and gRNAs are mixed. The chain is CRISPR-associated endonuclease Cas9 1 from Streptococcus thermophilus (strain ATCC BAA-491 / LMD-9).